A 266-amino-acid polypeptide reads, in one-letter code: Calpain small subunit 1 (266 aa).

M1 is subject to N-acetylmethionine. S6 is modified (phosphoserine). The EF-hand 1; atypical domain occupies 94 to 128 (EEVRQFRRLFAQLAGDDMEVSATELMNILNKVVTR). Residues A107, D110, E112, E117, D135, D150, D152, T154, K156, and E161 each coordinate Ca(2+). EF-hand domains are found at residues 137-170 (FGLD…NNIK), 167-202 (NNIK…AGFH), 203-231 (LNEH…ISCL), and 232-266 (VRLD…TMYS). K177 is modified (N6-acetyllysine). Positions 180, 182, 184, 186, 191, and 223 each coordinate Ca(2+).

As to quaternary structure, homodimer or heterodimer of a large (catalytic) and a small (regulatory) subunit. In presence of calcium, the heterodimer dissociates. In terms of processing, the N-terminus is blocked.

It localises to the cytoplasm. Its subcellular location is the cell membrane. Its function is as follows. Regulatory subunit of the calcium-regulated non-lysosomal thiol-protease which catalyzes limited proteolysis of substrates involved in cytoskeletal remodeling and signal transduction. Essential for embryonic development. The protein is Calpain small subunit 1 (CAPNS1) of Oryctolagus cuniculus (Rabbit).